The following is a 674-amino-acid chain: Methionine--tRNA ligase (674 aa).

The 'HIGH' region motif lies at 12 to 22 (PYANGPIHLGH). Zn(2+)-binding residues include C143, C146, C156, and C159. A 'KMSKS' region motif is present at residues 328–332 (KMSKS). An ATP-binding site is contributed by K331. Residues 573 to 674 (SFAKLDLRIA…EGARPGMRVK (102 aa)) form the tRNA-binding domain.

It belongs to the class-I aminoacyl-tRNA synthetase family. MetG type 1 subfamily. Homodimer. Zn(2+) is required as a cofactor.

It localises to the cytoplasm. It catalyses the reaction tRNA(Met) + L-methionine + ATP = L-methionyl-tRNA(Met) + AMP + diphosphate. Its function is as follows. Is required not only for elongation of protein synthesis but also for the initiation of all mRNA translation through initiator tRNA(fMet) aminoacylation. This chain is Methionine--tRNA ligase, found in Nitrosococcus oceani (strain ATCC 19707 / BCRC 17464 / JCM 30415 / NCIMB 11848 / C-107).